The chain runs to 794 residues: Protein sel-1 homolog 1 (794 aa).

Positions 1–21 (MQVRVRLLLLLCAVLLGSAAA) are cleaved as a signal peptide. The interval 22 to 737 (SSDEETNQDE…DLFTQLDMDQ (716 aa)) is interaction with ERLEC1, OS9 and SYVN1. The Lumenal segment spans residues 22–738 (SSDEETNQDE…LFTQLDMDQL (717 aa)). Acidic residues predominate over residues 23–32 (SDEETNQDES). 2 disordered regions span residues 23–46 (SDEE…GSVK) and 73–105 (QDEE…KTYE). Positions 122–170 (AHGEPCHFPFLFLDKEYDECTSDGREDGRLWCATTYDYKTDEKWGFCET) constitute a Fibronectin type-II domain. 2 cysteine pairs are disulfide-bonded: Cys-127-Cys-153 and Cys-141-Cys-168. Sel1-like repeat units lie at residues 183–218 (AEAI…GMNH), 219–254 (TKAL…EEGS), 255–290 (PKGQ…LGGN), 291–326 (LIAH…NHVA), 373–409 (VQAQ…NAGN), 410–446 (SHAM…DMGN), 447–482 (PVGQ…EQGW), 483–518 (VDGQ…QGGH), and 519–554 (ILAF…ERGR). 2 N-linked (GlcNAc...) asparagine glycosylation sites follow: Asn-195 and Asn-217. N-linked (GlcNAc...) asparagine glycosylation occurs at Asn-272. Positions 352-537 (NSGMLEEDLI…MHASGTGVMR (186 aa)) are important for homodimerization and oligomerization. Asn-431 carries an N-linked (GlcNAc...) asparagine glycan. A glycan (N-linked (GlcNAc...) asparagine) is linked at Asn-608. Sel1-like repeat units lie at residues 627-662 (TVAR…EQQH) and 664-699 (AQAM…EASP). The interaction with SYVN1 stretch occupies residues 643–723 (TDVDYETAFI…VVYFLQYIRE (81 aa)). The tract at residues 738-794 (LLGPEWDLYLMTIIALLLGTVIAYRQRQHQDIPVPRPPGPRPAPPQQEGPPEQQPPQ) is mediates retention in the endoplasmic reticulum. A helical transmembrane segment spans residues 739–759 (LGPEWDLYLMTIIALLLGTVI). Residues 760 to 794 (AYRQRQHQDIPVPRPPGPRPAPPQQEGPPEQQPPQ) are Cytoplasmic-facing. Residues 767–794 (QDIPVPRPPGPRPAPPQQEGPPEQQPPQ) form a disordered region. Over residues 771-794 (VPRPPGPRPAPPQQEGPPEQQPPQ) the composition is skewed to pro residues.

Belongs to the sel-1 family. Homodimer and homooligomer. May form a complex with ERLEC1, HSPA5, OS9, and SYVN1. Interacts with FOXRED2 and EDEM1. Interacts with LPL and LMF1; may stabilize the complex formed by LPL and LMF1 and thereby promote the export of LPL dimers. Component of the HRD1 complex, which comprises at least SYNV1/HRD1, DERL1/2, FAM8A1, HERPUD1/HERP, OS9, SEL1L and UBE2J1. SYNV1 assembles with SEL1L and FAM8A1 through its transmembrane domains, but interaction with its cytoplasmic domain is required to confer stability to FAM8A1 and enhance recruitment of HERPUD1. The interaction with SYNV1/HRD1 is direct. Post-translationally, N-glycosylated.

It localises to the endoplasmic reticulum membrane. In terms of biological role, plays a role in the endoplasmic reticulum quality control (ERQC) system also called ER-associated degradation (ERAD) involved in ubiquitin-dependent degradation of misfolded endoplasmic reticulum proteins. Enhances SYVN1 stability. Plays a role in LPL maturation and secretion. Required for normal differentiation of the pancreas epithelium, and for normal exocrine function and survival of pancreatic cells. May play a role in Notch signaling. In Rattus norvegicus (Rat), this protein is Protein sel-1 homolog 1 (Sel1l).